The sequence spans 460 residues: UDP-N-acetylmuramoylalanine--D-glutamate ligase (460 aa).

Glycine 115–threonine 121 serves as a coordination point for ATP.

This sequence belongs to the MurCDEF family.

The protein resides in the cytoplasm. It catalyses the reaction UDP-N-acetyl-alpha-D-muramoyl-L-alanine + D-glutamate + ATP = UDP-N-acetyl-alpha-D-muramoyl-L-alanyl-D-glutamate + ADP + phosphate + H(+). It participates in cell wall biogenesis; peptidoglycan biosynthesis. Its function is as follows. Cell wall formation. Catalyzes the addition of glutamate to the nucleotide precursor UDP-N-acetylmuramoyl-L-alanine (UMA). The polypeptide is UDP-N-acetylmuramoylalanine--D-glutamate ligase (Salinibacter ruber (strain DSM 13855 / M31)).